The following is a 280-amino-acid chain: Transcription factor HES-1 (280 aa).

Residues 1-44 (MPADIMEKNSSSPVAATPASVNTTPDKPKTASEHRKSSKPIMEK) are disordered. Residues 10–21 (SSSPVAATPASV) are compositionally biased toward low complexity. Over residues 26–35 (DKPKTASEHR) the composition is skewed to basic and acidic residues. Residues 34–91 (HRKSSKPIMEKRRRARINESLSQLKTLILDALKKDSSRHSKLEKADILEMTVKHLRNL) form the bHLH domain. Positions 110-143 (YRAGFSECMNEVTRFLSTCEGVNTEVRTRLLGHL) constitute an Orange domain. 2 disordered regions span residues 157 to 200 (GQPH…PPGG) and 254 to 280 (TSVG…PWRN). Composition is skewed to pro residues over residues 164-174 (QAPPPPPPGPG) and 181-200 (FAPP…PPGG). The segment covering 254 to 271 (TSVGPNAVSPSSGPSLTA) has biased composition (polar residues). The WRPW motif motif lies at 275–278 (WRPW).

In terms of assembly, transcription repression requires formation of a complex with a corepressor protein of the Groucho/TLE family. Interacts with SIRT1. Interacts (via WPRW motif) with TLE1, and more weakly with TLE2. Interacts with HES6. Interacts with an FA complex, composed of FANCA, FANCF, FANCG and FANCL, but not of FANCC, nor FANCE.

It localises to the nucleus. Functionally, transcriptional repressor of genes that require a bHLH protein for their transcription. May act as a negative regulator of myogenesis by inhibiting the functions of MYOD1 and ASH1. Binds DNA on N-box motifs: 5'-CACNAG-3' with high affinity and on E-box motifs: 5'-CANNTG-3' with low affinity. May play a role in a functional FA core complex response to DNA cross-link damage, being required for the stability and nuclear localization of FA core complex proteins, as well as for FANCD2 monoubiquitination in response to DNA damage. The chain is Transcription factor HES-1 (HES1) from Bos taurus (Bovine).